A 583-amino-acid chain; its full sequence is ATP-dependent lipid A-core flippase (583 aa).

5 helical membrane passes run 27–47 (LAVAVVALIINAVSDTYMVSL), 69–89 (LLVFGLMFIRGISSFVSTYCL), 142–162 (ALVSIVREGTSIIGLLVLMFY), 165–185 (WQLSLVLILVAPVVAWAIGFV), and 249–269 (AAANPIIQMIASIAIVVVLYL). The 283-residue stretch at 28–310 (AVAVVALIIN…LTNVTSQFQR (283 aa)) folds into the ABC transmembrane type-1 domain. In terms of domain architecture, ABC transporter spans 342-578 (VNVKDISFTY…DGAYAQLHRI (237 aa)). Residue 376–383 (GRSGSGKS) coordinates ATP.

This sequence belongs to the ABC transporter superfamily. Lipid exporter (TC 3.A.1.106) family. As to quaternary structure, homodimer.

It localises to the cell inner membrane. It carries out the reaction ATP + H2O + lipid A-core oligosaccharideSide 1 = ADP + phosphate + lipid A-core oligosaccharideSide 2.. Its function is as follows. Involved in lipopolysaccharide (LPS) biosynthesis. Translocates lipid A-core from the inner to the outer leaflet of the inner membrane. Transmembrane domains (TMD) form a pore in the inner membrane and the ATP-binding domain (NBD) is responsible for energy generation. The chain is ATP-dependent lipid A-core flippase from Vibrio vulnificus (strain YJ016).